A 503-amino-acid chain; its full sequence is Probable zinc metalloprotease UREG_01421 (503 aa).

Positions 1-24 are cleaved as a signal peptide; the sequence is MHSLSSALAGSTFVLLFLCLLASA. An N-linked (GlcNAc...) asparagine glycan is attached at N105. The Zn(2+) site is built by H176, D196, and E232. N247 carries an N-linked (GlcNAc...) asparagine glycan. D259 is a binding site for Zn(2+). The Fibronectin type-III domain maps to 416-503; sequence MPRNVRVSTR…RGVAVLPFPA (88 aa). Residue N429 is glycosylated (N-linked (GlcNAc...) asparagine).

Belongs to the peptidase M28 family. M28B subfamily. Zn(2+) is required as a cofactor.

The protein resides in the secreted. The sequence is that of Probable zinc metalloprotease UREG_01421 from Uncinocarpus reesii (strain UAMH 1704).